Here is a 340-residue protein sequence, read N- to C-terminus: Probable dual-specificity RNA methyltransferase RlmN (340 aa).

The Proton acceptor role is filled by Glu93. The region spanning Thr99–Glu327 is the Radical SAM core domain. Cys106 and Cys332 are disulfide-bonded. The [4Fe-4S] cluster site is built by Cys113, Cys117, and Cys120. Residues Gly160–Glu161, Ser190, Ser213–His215, and Asn289 each bind S-adenosyl-L-methionine. Cys332 (S-methylcysteine intermediate) is an active-site residue.

This sequence belongs to the radical SAM superfamily. RlmN family. [4Fe-4S] cluster is required as a cofactor.

The protein localises to the cytoplasm. The catalysed reaction is adenosine(2503) in 23S rRNA + 2 reduced [2Fe-2S]-[ferredoxin] + 2 S-adenosyl-L-methionine = 2-methyladenosine(2503) in 23S rRNA + 5'-deoxyadenosine + L-methionine + 2 oxidized [2Fe-2S]-[ferredoxin] + S-adenosyl-L-homocysteine. The enzyme catalyses adenosine(37) in tRNA + 2 reduced [2Fe-2S]-[ferredoxin] + 2 S-adenosyl-L-methionine = 2-methyladenosine(37) in tRNA + 5'-deoxyadenosine + L-methionine + 2 oxidized [2Fe-2S]-[ferredoxin] + S-adenosyl-L-homocysteine. In terms of biological role, specifically methylates position 2 of adenine 2503 in 23S rRNA and position 2 of adenine 37 in tRNAs. This Rippkaea orientalis (strain PCC 8801 / RF-1) (Cyanothece sp. (strain PCC 8801)) protein is Probable dual-specificity RNA methyltransferase RlmN.